A 427-amino-acid polypeptide reads, in one-letter code: Enolase (427 aa).

Residue Gln-163 coordinates (2R)-2-phosphoglycerate. Glu-205 (proton donor) is an active-site residue. Mg(2+)-binding residues include Asp-242, Glu-285, and Asp-312. Residues Lys-337, Arg-366, Ser-367, and Lys-388 each coordinate (2R)-2-phosphoglycerate. Catalysis depends on Lys-337, which acts as the Proton acceptor.

Belongs to the enolase family. Requires Mg(2+) as cofactor.

The protein localises to the cytoplasm. It is found in the secreted. Its subcellular location is the cell surface. The catalysed reaction is (2R)-2-phosphoglycerate = phosphoenolpyruvate + H2O. The protein operates within carbohydrate degradation; glycolysis; pyruvate from D-glyceraldehyde 3-phosphate: step 4/5. Its function is as follows. Catalyzes the reversible conversion of 2-phosphoglycerate (2-PG) into phosphoenolpyruvate (PEP). It is essential for the degradation of carbohydrates via glycolysis. This chain is Enolase, found in Paraburkholderia phymatum (strain DSM 17167 / CIP 108236 / LMG 21445 / STM815) (Burkholderia phymatum).